Here is a 249-residue protein sequence, read N- to C-terminus: NADH dehydrogenase [ubiquinone] flavoprotein 2, mitochondrial (249 aa).

The transit peptide at 1–32 (MFFSAALRARAAGLTAHWGRHVRNLHKTAKQN) directs the protein to the mitochondrion. Lys-61 bears the N6-acetyllysine mark. Residues Cys-135, Cys-140, Cys-176, and Cys-180 each contribute to the [2Fe-2S] cluster site. Tyr-193 carries the post-translational modification Phosphotyrosine; by SRC. Residues 213–249 (IPKPGPRSGRFSCEPAGGLTSLTEPPKGPGFGVQAGL) are disordered.

Belongs to the complex I 24 kDa subunit family. Core subunit of respiratory chain NADH dehydrogenase (Complex I) which is composed of 45 different subunits. This is a component of the flavoprotein-sulfur (FP) fragment of the enzyme. [2Fe-2S] cluster serves as cofactor.

It is found in the mitochondrion inner membrane. It catalyses the reaction a ubiquinone + NADH + 5 H(+)(in) = a ubiquinol + NAD(+) + 4 H(+)(out). Functionally, core subunit of the mitochondrial membrane respiratory chain NADH dehydrogenase (Complex I) which catalyzes electron transfer from NADH through the respiratory chain, using ubiquinone as an electron acceptor. Parts of the peripheral arm of the enzyme, where the electrons from NADH are accepted by flavin mononucleotide (FMN) and then passed along a chain of iron-sulfur clusters by electron tunnelling to the final acceptor ubiquinone. Contains one iron-sulfur cluster. This is NADH dehydrogenase [ubiquinone] flavoprotein 2, mitochondrial from Pan troglodytes (Chimpanzee).